The following is a 390-amino-acid chain: Elongation factor Ts 2, mitochondrial (390 aa).

The transit peptide at 1-24 directs the protein to the mitochondrion; sequence MMIFSTAVLRLCATSRIGAVTKRA. A compositionally biased stretch (low complexity) spans 30–40; it reads SSASSSSSSSS. A disordered region spans residues 30-54; it reads SSASSSSSSSSPTQSMPPQRYTHHQ.

It belongs to the EF-Ts family.

Its subcellular location is the mitochondrion. Its function is as follows. Associates with the EF-Tu.GDP complex and induces the exchange of GDP to GTP. It remains bound to the aminoacyl-tRNA.EF-Tu.GTP complex up to the GTP hydrolysis stage on the ribosome. In Thalassiosira pseudonana (Marine diatom), this protein is Elongation factor Ts 2, mitochondrial.